The following is a 132-amino-acid chain: Small ribosomal subunit protein uS8 (132 aa).

It belongs to the universal ribosomal protein uS8 family. In terms of assembly, part of the 30S ribosomal subunit. Contacts proteins S5 and S12.

Functionally, one of the primary rRNA binding proteins, it binds directly to 16S rRNA central domain where it helps coordinate assembly of the platform of the 30S subunit. In Clostridioides difficile (strain 630) (Peptoclostridium difficile), this protein is Small ribosomal subunit protein uS8.